A 250-amino-acid polypeptide reads, in one-letter code: Flap endonuclease Xni (250 aa).

Position 104 (Asp-104) interacts with Mg(2+). A 5'-3' exonuclease domain is found at 160-249; the sequence is VQPQQLTDFW…LQGNLQQLRL (90 aa). Residues Leu-171, Ala-172, Pro-180, Val-182, and Ile-185 each contribute to the K(+) site. Residues 184–189 form an interaction with DNA region; it reads GIGPKS.

It belongs to the Xni family. The cofactor is Mg(2+). K(+) is required as a cofactor.

Functionally, has flap endonuclease activity. During DNA replication, flap endonucleases cleave the 5'-overhanging flap structure that is generated by displacement synthesis when DNA polymerase encounters the 5'-end of a downstream Okazaki fragment. This Sodalis glossinidius (strain morsitans) protein is Flap endonuclease Xni.